Here is a 107-residue protein sequence, read N- to C-terminus: UPF0145 protein CKO_02237 (107 aa).

The protein belongs to the UPF0145 family.

In Citrobacter koseri (strain ATCC BAA-895 / CDC 4225-83 / SGSC4696), this protein is UPF0145 protein CKO_02237.